Consider the following 706-residue polypeptide: Transmembrane and coiled-coil domains protein 2 (706 aa).

Disordered stretches follow at residues 1-221 and 251-280; these read MKRC…TTDT and VALS…PDPQ. Serine 6 is subject to Phosphoserine. Positions 83–94 are enriched in basic residues; sequence GLKHLFHSRRRS. The segment covering 102-112 has biased composition (low complexity); it reads SQEAQQQQQQQ. A compositionally biased stretch (basic and acidic residues) spans 120–131; sequence PDEKERSPEMHR. Arginine 163 carries the post-translational modification Omega-N-methylarginine. Positions 330–365 form a coiled coil; that stretch reads KQVFEKKNQKSAQTIAQLHKKLEHYRRRLKEIEQNG. The residue at position 435 (serine 435) is a Phosphoserine. Residues 440-459 are disordered; it reads AHLKDPMEDGPPEEAARALS. Phosphoserine occurs at positions 461 and 467. The segment at 464–510 is disordered; that stretch reads LVSSPKYGSDDECSSASASSAGAGSNSGAGPGGALGSPRSNTLYGAP. The segment covering 477–487 has biased composition (low complexity); it reads SSASASSAGAG. A compositionally biased stretch (gly residues) spans 488–498; that stretch reads SNSGAGPGGAL. Serine 500 is subject to Phosphoserine. Residues 511–630 are a coiled coil; sequence GNLDTLLEEL…QQQQVVQLEG (120 aa). 2 consecutive transmembrane segments (helical) span residues 646–666 and 679–699; these read VILA…NFIT and ALLL…TYLL.

This sequence belongs to the TEX28 family. In terms of assembly, may form homodimers and heterodimers with TMCC2 or TMCC3 via the coiled-coil domains. Interacts with ribosomal proteins RPL4 and RPS6. Interacts with APOE and proteolytic processed C-terminal fragment C99 of the amyloid precursor protein (APP C99).

It is found in the endoplasmic reticulum membrane. In terms of biological role, may be involved in the regulation of the proteolytic processing of the amyloid precursor protein (APP) possibly also implicating APOE. The protein is Transmembrane and coiled-coil domains protein 2 of Mus musculus (Mouse).